The following is a 434-amino-acid chain: Histidinol dehydrogenase (434 aa).

NAD(+)-binding residues include Y129, Q191, and N214. The substrate site is built by S240, Q262, and H265. Zn(2+) contacts are provided by Q262 and H265. Residues E329 and H330 each act as proton acceptor in the active site. Substrate is bound by residues H330, D363, E417, and H422. D363 provides a ligand contact to Zn(2+). H422 lines the Zn(2+) pocket.

It belongs to the histidinol dehydrogenase family. Zn(2+) serves as cofactor.

It carries out the reaction L-histidinol + 2 NAD(+) + H2O = L-histidine + 2 NADH + 3 H(+). The protein operates within amino-acid biosynthesis; L-histidine biosynthesis; L-histidine from 5-phospho-alpha-D-ribose 1-diphosphate: step 9/9. Functionally, catalyzes the sequential NAD-dependent oxidations of L-histidinol to L-histidinaldehyde and then to L-histidine. This Colwellia psychrerythraea (strain 34H / ATCC BAA-681) (Vibrio psychroerythus) protein is Histidinol dehydrogenase.